A 178-amino-acid polypeptide reads, in one-letter code: ATP synthase subunit b, chloroplastic (178 aa).

Residues 34-50 (LAILTGGIFYLGSNALS) form a helical membrane-spanning segment.

Belongs to the ATPase B chain family. F-type ATPases have 2 components, F(1) - the catalytic core - and F(0) - the membrane proton channel. F(1) has five subunits: alpha(3), beta(3), gamma(1), delta(1), epsilon(1). F(0) has four main subunits: a(1), b(1), b'(1) and c(10-14). The alpha and beta chains form an alternating ring which encloses part of the gamma chain. F(1) is attached to F(0) by a central stalk formed by the gamma and epsilon chains, while a peripheral stalk is formed by the delta, b and b' chains.

The protein localises to the plastid. The protein resides in the chloroplast thylakoid membrane. F(1)F(0) ATP synthase produces ATP from ADP in the presence of a proton or sodium gradient. F-type ATPases consist of two structural domains, F(1) containing the extramembraneous catalytic core and F(0) containing the membrane proton channel, linked together by a central stalk and a peripheral stalk. During catalysis, ATP synthesis in the catalytic domain of F(1) is coupled via a rotary mechanism of the central stalk subunits to proton translocation. Functionally, component of the F(0) channel, it forms part of the peripheral stalk, linking F(1) to F(0). The polypeptide is ATP synthase subunit b, chloroplastic (Ochrosphaera neapolitana).